We begin with the raw amino-acid sequence, 1344 residues long: Centrosomal P4.1-associated protein (1344 aa).

Disordered regions lie at residues 67–123 (SSEE…NNDL) and 187–225 (PGTLLPDDQSQKHRSPGDLTLPPHSYSNPTQENSCASNV). Residues 211 to 225 (SYSNPTQENSCASNV) show a composition bias toward polar residues. Ser248 is modified (phosphoserine). Residues 257–300 (QEAHVKRNDLKEESPAHPSGEGALPRWEKKMGRSQEGKDVNLQK) are disordered. Basic and acidic residues-rich tracts occupy residues 259–271 (AHVKRNDLKEESP) and 282–297 (RWEKKMGRSQEGKDVN). Ser304 is modified (phosphoserine). An alpha/beta-tubulin binding region spans residues 307 to 382 (VVNIDERPIK…FTNAKSKFQK (76 aa)). Disordered stretches follow at residues 347–407 (QEAE…DRQH) and 425–470 (TVKK…KKRD). Positions 388-398 (LASTQSPSEDQ) are enriched in polar residues. Ser528 carries the post-translational modification Phosphoserine. 2 positions are modified to phosphoserine; by PLK2: Ser577 and Ser583. Disordered regions lie at residues 600-626 (RLSSTPVKAVQQREAQQADPRGQSNCS) and 672-735 (TSEI…DTGA). Residues 709–720 (VGDRVFSNREDS) are compositionally biased toward basic and acidic residues. A Phosphoserine modification is found at Ser748. The interaction with STIL stretch occupies residues 887 to 1344 (QPPEFMVCFI…DGNVLMDTEM (458 aa)). Positions 1105–1133 (QGNLSRRIKSAPPRDLGSSDKGQAALPRE) are disordered.

It belongs to the TCP10 family. Forms homodimers. Associates with microtubules plus ends; binds to beta-tubulin subunits exposed on microtubule outer surface at its distal tip; also associates with microtubule lattice. Associated with the gamma-tubulin complex. Interacts with the head domain of EPB41. Interacts with LYST. Interacts with CEP152 (via C-terminus). Interacts with STIL. Forms a complex with STIL and SASS6. In terms of processing, phosphorylation at Ser-577 and Ser-583 by PLK2 is required for procentriole formation and centriole elongation. Phosphorylation by PLK2 oscillates during the cell cycle: it increases at G1/S transition and decreases during the exit from mitosis. Phosphorylation at Ser-583 is also mediated by PLK4 but is not a critical step in PLK4 function in procentriole assembly.

It is found in the cytoplasm. It localises to the cytoskeleton. The protein resides in the microtubule organizing center. The protein localises to the centrosome. Its subcellular location is the centriole. In terms of biological role, plays an important role in cell division and centrosome function by participating in centriole duplication. Inhibits microtubule nucleation from the centrosome. Involved in the regulation of slow processive growth of centriolar microtubules. Acts as microtubule plus-end tracking protein that stabilizes centriolar microtubules and inhibits microtubule polymerization and extension from the distal ends of centrioles. Required for centriole elongation and for STIL-mediated centriole amplification. Required for the recruitment of CEP295 to the proximal end of new-born centrioles at the centriolar microtubule wall during early S phase in a PLK4-dependent manner. May be involved in the control of centriolar-microtubule growth by acting as a regulator of tubulin release. This chain is Centrosomal P4.1-associated protein (Cpap), found in Mus musculus (Mouse).